Reading from the N-terminus, the 461-residue chain is Argininosuccinate lyase (461 aa).

This sequence belongs to the lyase 1 family. Argininosuccinate lyase subfamily.

The protein resides in the cytoplasm. It carries out the reaction 2-(N(omega)-L-arginino)succinate = fumarate + L-arginine. Its pathway is amino-acid biosynthesis; L-arginine biosynthesis; L-arginine from L-ornithine and carbamoyl phosphate: step 3/3. The sequence is that of Argininosuccinate lyase from Desulfitobacterium hafniense (strain DSM 10664 / DCB-2).